The primary structure comprises 163 residues: Staphylokinase (163 aa).

A signal peptide spans 1 to 27; that stretch reads MLKRSLLFLTVLLLLFSFSSITNEVSA.

The protein belongs to the staphylokinase family.

The protein resides in the secreted. Potent plasminogen activator that converts plasminogen into plasmin. It forms a 1:1 complex with plasmin, which in turn activates other plasminogen molecules. This chain is Staphylokinase (sak), found in Staphylococcus aureus (Bacteriophage P42D).